The primary structure comprises 300 residues: 3-dehydrocarnitine:acetyl-CoA trimethylamine transferase (300 aa).

The Zn(2+) site is built by His-51, His-53, and Glu-254.

Belongs to the BKACE family. In terms of assembly, homotetramer. Zn(2+) serves as cofactor.

The enzyme catalyses 3-dehydrocarnitine + acetyl-CoA = N,N,N-trimethylglycyl-CoA + acetoacetate. Its pathway is amine and polyamine metabolism; carnitine metabolism. Functionally, catalyzes the condensation of dehydrocarnitine and acetyl-CoA, forming acetoacetate and betainyl-CoA (N,N,N-trimethylglycyl-CoA). Is involved in a L-carnitine degradation pathway that allows R.meliloti to grow on L-carnitine as the sole source of carbon and nitrogen. The protein is 3-dehydrocarnitine:acetyl-CoA trimethylamine transferase of Rhizobium meliloti (strain 1021) (Ensifer meliloti).